The chain runs to 120 residues: Cytochrome c6 (120 aa).

The first 35 residues, 1-35 (MFKLFNQASRIFFGIALPCLIFLGGIFSLGNTALA), serve as a signal peptide directing secretion. Heme c-binding residues include C49, C52, H53, and M93.

It belongs to the cytochrome c family. PetJ subfamily. Monomer. Binds 1 heme c group covalently per subunit.

Its subcellular location is the cellular thylakoid lumen. Functionally, functions as an electron carrier between membrane-bound cytochrome b6-f and photosystem I in oxygenic photosynthesis. This is Cytochrome c6 (petJ) from Synechocystis sp. (strain ATCC 27184 / PCC 6803 / Kazusa).